We begin with the raw amino-acid sequence, 440 residues long: 26S proteasome regulatory subunit 4 (440 aa).

Over residues 1–13 (MGQSQSGGHGPGG) the composition is skewed to gly residues. Residues 1–49 (MGQSQSGGHGPGGGKKDDKDKKKKYEPPVPTRVGKKKKKTKGPDAASKL) are disordered. Glycine 2 carries N-myristoyl glycine lipidation. A Phosphoserine modification is found at serine 4. Residues 14–26 (GKKDDKDKKKKYE) are compositionally biased toward basic and acidic residues. Threonine 53 is subject to Phosphothreonine. The interval 84–104 (QMKPLEEKQEEERSKVDDLRG) is disordered. The span at 86-103 (KPLEEKQEEERSKVDDLR) shows a compositional bias: basic and acidic residues. 226-233 (GPPGTGKT) contributes to the ATP binding site. Lysine 237 participates in a covalent cross-link: Glycyl lysine isopeptide (Lys-Gly) (interchain with G-Cter in ubiquitin). Lysine 258 is modified (N6-acetyllysine). Phosphothreonine is present on threonine 434. Tyrosine 439 carries the post-translational modification Phosphotyrosine.

The protein belongs to the AAA ATPase family. Component of the 19S proteasome regulatory particle complex. The 26S proteasome consists of a 20S core particle (CP) and two 19S regulatory subunits (RP). The regulatory particle is made of a lid composed of 9 subunits, a base containing 6 ATPases including PSMC1 and few additional components. Interacts with SCA7. Interacts with NGLY1. Interacts with PAAF1.

The protein resides in the cytoplasm. The protein localises to the nucleus. It is found in the membrane. Functionally, component of the 26S proteasome, a multiprotein complex involved in the ATP-dependent degradation of ubiquitinated proteins. This complex plays a key role in the maintenance of protein homeostasis by removing misfolded or damaged proteins, which could impair cellular functions, and by removing proteins whose functions are no longer required. Therefore, the proteasome participates in numerous cellular processes, including cell cycle progression, apoptosis, or DNA damage repair. PSMC1 belongs to the heterohexameric ring of AAA (ATPases associated with diverse cellular activities) proteins that unfolds ubiquitinated target proteins that are concurrently translocated into a proteolytic chamber and degraded into peptides. In Homo sapiens (Human), this protein is 26S proteasome regulatory subunit 4 (PSMC1).